We begin with the raw amino-acid sequence, 332 residues long: ADP-L-glycero-D-manno-heptose-6-epimerase (332 aa).

Residues Phe10 to Ile11, Asp31 to Asp32, Lys38, Gln74 to Ser78, and Asn91 contribute to the NADP(+) site. Tyr138 acts as the Proton acceptor in catalysis. Position 142 (Lys142) interacts with NADP(+). A substrate-binding site is contributed by Asn167. NADP(+) is bound by residues Val168 and Lys176. The active-site Proton acceptor is Lys176. Substrate is bound by residues Arg178, His185, Phe199 to Trp202, Arg212, and Tyr291.

It belongs to the NAD(P)-dependent epimerase/dehydratase family. HldD subfamily. Homopentamer. The cofactor is NADP(+).

The enzyme catalyses ADP-D-glycero-beta-D-manno-heptose = ADP-L-glycero-beta-D-manno-heptose. It participates in nucleotide-sugar biosynthesis; ADP-L-glycero-beta-D-manno-heptose biosynthesis; ADP-L-glycero-beta-D-manno-heptose from D-glycero-beta-D-manno-heptose 7-phosphate: step 4/4. Functionally, catalyzes the interconversion between ADP-D-glycero-beta-D-manno-heptose and ADP-L-glycero-beta-D-manno-heptose via an epimerization at carbon 6 of the heptose. This chain is ADP-L-glycero-D-manno-heptose-6-epimerase, found in Bordetella avium (strain 197N).